Consider the following 398-residue polypeptide: tRNA-specific 2-thiouridylase MnmA (398 aa).

ATP is bound by residues 18 to 25 (AMSGGVDS) and Leu-44. The active-site Nucleophile is the Cys-112. Cys-112 and Cys-213 are disulfide-bonded. Gly-136 provides a ligand contact to ATP. Positions 163–165 (RDQ) are interaction with tRNA. The active-site Cysteine persulfide intermediate is Cys-213.

This sequence belongs to the MnmA/TRMU family.

Its subcellular location is the cytoplasm. It carries out the reaction S-sulfanyl-L-cysteinyl-[protein] + uridine(34) in tRNA + AH2 + ATP = 2-thiouridine(34) in tRNA + L-cysteinyl-[protein] + A + AMP + diphosphate + H(+). Functionally, catalyzes the 2-thiolation of uridine at the wobble position (U34) of tRNA, leading to the formation of s(2)U34. The chain is tRNA-specific 2-thiouridylase MnmA from Agrobacterium fabrum (strain C58 / ATCC 33970) (Agrobacterium tumefaciens (strain C58)).